A 272-amino-acid polypeptide reads, in one-letter code: Protein FAM210A (272 aa).

The DUF1279 domain maps to 117-229 (DKSISLYQRF…GYMSTPPPVK (113 aa)). Residues 136–156 (VLIPVHLITSGVWFGTFYYAA) traverse the membrane as a helical segment. Residues 229-271 (KEYLQDRMEETKELITEKMEETKDRLTEKLQETKEKVSFKKKV) are a coiled coil. Residues 246–272 (KMEETKDRLTEKLQETKEKVSFKKKVE) form a disordered region.

The protein belongs to the FAM210 family. In terms of assembly, interacts with ATAD3A.

Its subcellular location is the membrane. It localises to the mitochondrion. It is found in the cytoplasm. May play a role in the structure and strength of both muscle and bone. This Homo sapiens (Human) protein is Protein FAM210A (FAM210A).